We begin with the raw amino-acid sequence, 337 residues long: DNA-directed RNA polymerase subunit alpha (337 aa).

Residues 1-233 are alpha N-terminal domain (alpha-NTD); that stretch reads MVREKVRVST…DLFIPFLHAE (233 aa). Residues 267–337 are alpha C-terminal domain (alpha-CTD); the sequence is IALKSIFIDQ…KAFHNPFTEE (71 aa).

This sequence belongs to the RNA polymerase alpha chain family. In terms of assembly, in plastids the minimal PEP RNA polymerase catalytic core is composed of four subunits: alpha, beta, beta', and beta''. When a (nuclear-encoded) sigma factor is associated with the core the holoenzyme is formed, which can initiate transcription.

It localises to the plastid. The protein resides in the chloroplast. The catalysed reaction is RNA(n) + a ribonucleoside 5'-triphosphate = RNA(n+1) + diphosphate. Functionally, DNA-dependent RNA polymerase catalyzes the transcription of DNA into RNA using the four ribonucleoside triphosphates as substrates. The chain is DNA-directed RNA polymerase subunit alpha from Eucalyptus globulus subsp. globulus (Tasmanian blue gum).